The sequence spans 244 residues: Membrane-spanning 4-domains subfamily A member 6B (244 aa).

The Cytoplasmic segment spans residues 1–46; the sequence is MIPQVVTSETVAMISPNGMSLPQTDKPQPFHQWQDSLKKHLKAEIK. Residues 47–67 form a helical membrane-spanning segment; the sequence is VMAAIQIMCAVMVLSLGIILA. Topologically, residues 68-84 are extracellular; sequence SVPSNLHFTSVFSVLLK. The chain crosses the membrane as a helical span at residues 85-105; it reads SGYPFIGALFFIVSGILSIVT. The Cytoplasmic portion of the chain corresponds to 106–121; it reads ETKSTKILVDSSLTLN. Residues 122 to 142 traverse the membrane as a helical segment; the sequence is ILSVSFAFMGIIIISVSLAGL. Topologically, residues 143 to 176 are extracellular; sequence HPASEQCLQSKELRPTEYHYYQFLDRNECFAAKS. Residues 177-197 traverse the membrane as a helical segment; that stretch reads VLAGVFSLMLISTMLELGLAV. Over 198 to 244 the chain is Cytoplasmic; that stretch reads LTAMLWWKQSHSNIPGNVMFLPHSSNNDSNMESKVLCNPSYEEQLVC.

Belongs to the MS4A family. In terms of tissue distribution, expressed at high levels in thymus, spleen, and peripheral lymph nodes, with less abundant levels in non-lymphoid tissues.

The protein resides in the membrane. May be involved in signal transduction as a component of a multimeric receptor complex. The sequence is that of Membrane-spanning 4-domains subfamily A member 6B (Ms4a6b) from Mus musculus (Mouse).